We begin with the raw amino-acid sequence, 610 residues long: DNA mismatch repair protein MutL (610 aa).

This sequence belongs to the DNA mismatch repair MutL/HexB family.

Functionally, this protein is involved in the repair of mismatches in DNA. It is required for dam-dependent methyl-directed DNA mismatch repair. May act as a 'molecular matchmaker', a protein that promotes the formation of a stable complex between two or more DNA-binding proteins in an ATP-dependent manner without itself being part of a final effector complex. This chain is DNA mismatch repair protein MutL, found in Rickettsia peacockii (strain Rustic).